We begin with the raw amino-acid sequence, 359 residues long: Membrane-bound lytic murein transglycosylase C (359 aa).

The first 16 residues, 1-16, serve as a signal peptide directing secretion; it reads MKKYLALALIAPLLIS. The N-palmitoyl cysteine moiety is linked to residue C17. C17 carries the S-diacylglycerol cysteine lipid modification.

This sequence belongs to the transglycosylase Slt family.

Its subcellular location is the cell outer membrane. The catalysed reaction is Exolytic cleavage of the (1-&gt;4)-beta-glycosidic linkage between N-acetylmuramic acid (MurNAc) and N-acetylglucosamine (GlcNAc) residues in peptidoglycan, from either the reducing or the non-reducing ends of the peptidoglycan chains, with concomitant formation of a 1,6-anhydrobond in the MurNAc residue.. In terms of biological role, murein-degrading enzyme. May play a role in recycling of muropeptides during cell elongation and/or cell division. The protein is Membrane-bound lytic murein transglycosylase C of Escherichia coli O81 (strain ED1a).